The chain runs to 567 residues: Frizzled-7 (567 aa).

An N-terminal signal peptide occupies residues 1–31 (MRPAAGEAGAGLRWLGLAALLAALLGTPCAA). Over 32–250 (AHHEDKAISV…EAEVRFARLW (219 aa)) the chain is Extracellular. The FZ domain maps to 42-161 (PDHGFCQPIS…HGAGEICVGQ (120 aa)). Disulfide bonds link Cys47-Cys108, Cys55-Cys101, Cys92-Cys129, Cys118-Cys158, and Cys122-Cys146. An N-linked (GlcNAc...) asparagine glycan is attached at Asn61. Asn162 carries N-linked (GlcNAc...) asparagine glycosylation. A helical transmembrane segment spans residues 251–271 (VGVWSVLCCASTLFTVLTYLV). Topologically, residues 272–282 (DMRRFSYPERP) are cytoplasmic. Residues 283–303 (IIFLSGCYFMVAVAYAAGFLL) traverse the membrane as a helical segment. The Extracellular segment spans residues 304–330 (EERVVCLERFSEDGYRTVAQGTKKEGC). A helical membrane pass occupies residues 331–351 (TILFMILYFFGMASSIWWVIL). At 352–373 (SLTWFLAAGMKWGHEAIEANSQ) the chain is on the cytoplasmic side. A helical transmembrane segment spans residues 374 to 394 (YFHLAAWAVPAVKTITILAMG). Residues 395–417 (QVDGDVLSGVCYVGIYSVDSLRG) lie on the Extracellular side of the membrane. The chain crosses the membrane as a helical span at residues 418 to 438 (FVLAPLFVYLFIGTSFLLAGF). The Cytoplasmic portion of the chain corresponds to 439-464 (VSLFRIRTIMKHDGTKTEKLEKLMVR). The helical transmembrane segment at 465–485 (IGVFSVLYTVPATIVVACYFY) threads the bilayer. Residues 486–521 (EQAFRSTWEKTWLLQTCKTYAVPCPSHFAPMSPDFT) lie on the Extracellular side of the membrane. A helical transmembrane segment spans residues 522-542 (VFMIKYLMTMIVGITTGFWIW). Over 543 to 567 (SGKTLQSWRRFYHRLSTGSKGETAV) the chain is Cytoplasmic. A Lys-Thr-X-X-X-Trp motif, mediates interaction with the PDZ domain of Dvl family members motif is present at residues 545–550 (KTLQSW). The short motif at 565–567 (TAV) is the PDZ-binding element.

The protein belongs to the G-protein coupled receptor Fz/Smo family. Expressed broadly in cranial ectoderm. Also expressed in the developing somites and in other cranial placodes, including the olfactory, lens, otic placodes (lateral half of the vesicle) and epibranchial placodes. Low level of expression in all the mesoderm derivatives in the limb buds.

It localises to the cell membrane. The protein localises to the endosome membrane. In terms of biological role, receptor for Wnt proteins. Most of frizzled receptors are coupled to the beta-catenin canonical signaling pathway, which leads to the activation of disheveled proteins, inhibition of GSK-3 kinase, nuclear accumulation of beta-catenin and activation of Wnt target genes. A second signaling pathway involving PKC and calcium fluxes has been seen for some family members, but it is not yet clear if it represents a distinct pathway or if it can be integrated in the canonical pathway, as PKC seems to be required for Wnt-mediated inactivation of GSK-3 kinase. Both pathways seem to involve interactions with G-proteins. May be involved in transduction and intercellular transmission of polarity information during tissue morphogenesis and/or in differentiated tissues. The polypeptide is Frizzled-7 (FZD7) (Gallus gallus (Chicken)).